The sequence spans 660 residues: Glycine betaine transporter (660 aa).

Topologically, residues 1–13 (MPSKTSSRFANIN) are cytoplasmic. A helical membrane pass occupies residues 14-34 (PNVFVSTIMIIAIFLAIVILA). Over 35 to 52 (PDAFELLTQQLKNWITES) the chain is Periplasmic. The helical transmembrane segment at 53 to 73 (FSWFYVLSVAFFLIVLGYIAC) threads the bilayer. Over 74-93 (SSSGKIKLGPDHSQPDYSNS) the chain is Cytoplasmic. Residues 94 to 114 (SWFAMLFTAGMGIGLMFFGIA) form a helical membrane-spanning segment. The Periplasmic portion of the chain corresponds to 115–139 (EPIMHYVSPPSGEPETILAAQQSMR). A helical membrane pass occupies residues 140–160 (VTFFHWGLHAWGIYAIVALSL). Over 161 to 195 (SYFAYRHDLPLKIRSSLYPLIGKKIYGPMGDAVDT) the chain is Cytoplasmic. A helical membrane pass occupies residues 196–216 (FATIGTIFGVATTLGFGVTQI). Over 217–230 (SSGLNYLFGFEPTS) the chain is Periplasmic. The helical transmembrane segment at 231 to 251 (FSKVVLIIIVSAMAALSVGLG) threads the bilayer. The Cytoplasmic segment spans residues 252 to 263 (LDKGVKRLAELN). Residues 264-284 (LVLAVTLLAFVFFTSATVYLL) form a helical membrane-spanning segment. Residues 285 to 316 (QTTIQNTGQYISNLFEMTFNLYAYQPNGWIGG) are Periplasmic-facing. Residues 317-337 (WTIMYWAWWISWSPFVGMFIA) form a helical membrane-spanning segment. Over 338-347 (RVSRGRTIRE) the chain is Cytoplasmic. A helical membrane pass occupies residues 348–368 (FIIGVMLIPTGFTLIWMGFMG). Residues 369-401 (NAGLYSILHDGNLSLLNAVQRDSSVALFEFLHS) are Periplasmic-facing. A helical transmembrane segment spans residues 402-422 (LPFSGVMSLLATVLVVLFFVT). Topologically, residues 423–446 (SADSGALVVDYLTAKSEDSPVWQR) are cytoplasmic. A helical transmembrane segment spans residues 447-467 (LFWIVVMAGLAIILLLAGGLT). The Periplasmic portion of the chain corresponds to 468-471 (ALQS). A helical membrane pass occupies residues 472–492 (ATIMSALPFTFIMLLICWGLI). Residues 493–660 (KALRIDSTKM…LSVMRAQTGN (168 aa)) lie on the Cytoplasmic side of the membrane.

Belongs to the BCCT transporter (TC 2.A.15) family.

The protein localises to the cell inner membrane. Uptake is activated by NaCl, KCl or mannose gradients across the cell membrane. Inhibited by the protonophore 3,3',4',5-tetrachlorosalicylanilide (TCS). In terms of biological role, energy-dependent uptake of glycine betaine in response to high salinity. The chain is Glycine betaine transporter from Acinetobacter baylyi (strain ATCC 33305 / BD413 / ADP1).